The chain runs to 640 residues: Threonine--tRNA ligase (640 aa).

The TGS domain maps to 1–61 (MPIITLPDGN…EKDSEVNIIT (61 aa)). The catalytic stretch occupies residues 242–533 (DHRRIAKQMS…LIEHYAGRMP (292 aa)). Zn(2+)-binding residues include Cys-333, His-384, and His-510.

The protein belongs to the class-II aminoacyl-tRNA synthetase family. In terms of assembly, homodimer. Zn(2+) is required as a cofactor.

It localises to the cytoplasm. The enzyme catalyses tRNA(Thr) + L-threonine + ATP = L-threonyl-tRNA(Thr) + AMP + diphosphate + H(+). Its function is as follows. Catalyzes the attachment of threonine to tRNA(Thr) in a two-step reaction: L-threonine is first activated by ATP to form Thr-AMP and then transferred to the acceptor end of tRNA(Thr). Also edits incorrectly charged L-seryl-tRNA(Thr). This is Threonine--tRNA ligase from Prochlorococcus marinus (strain MIT 9303).